Here is a 218-residue protein sequence, read N- to C-terminus: MSFFDSYRKKMQMPSKEEVLPGRVQPIPTAAAHFVSGHPLKGPWPDGMKQVLFGMGCFWGAERLFWQVPGVYVTAVGYAGGITPNPTYEETCTGLTGHAEVVLVVYDPKVVTLNELLALFWEEHDPTQGMRQGNDIGTTYRSVIYTFNAVDRAVAEKSRDAYSQALASRGLGPVTTQIADAPDFYYAEDYHQQYLAKNPDGYCGLRGTDVSCPIPLAH.

Residue Cys57 is part of the active site.

The protein belongs to the MsrA Met sulfoxide reductase family.

The enzyme catalyses L-methionyl-[protein] + [thioredoxin]-disulfide + H2O = L-methionyl-(S)-S-oxide-[protein] + [thioredoxin]-dithiol. The catalysed reaction is [thioredoxin]-disulfide + L-methionine + H2O = L-methionine (S)-S-oxide + [thioredoxin]-dithiol. Functionally, has an important function as a repair enzyme for proteins that have been inactivated by oxidation. Catalyzes the reversible oxidation-reduction of methionine sulfoxide in proteins to methionine. The chain is Peptide methionine sulfoxide reductase MsrA from Brucella suis biovar 1 (strain 1330).